Here is a 542-residue protein sequence, read N- to C-terminus: CTP synthase (542 aa).

The interval 1 to 266 is amidoligase domain; sequence MATNYIFVTG…DEFVCNRFHL (266 aa). Residue S14 coordinates CTP. Residue S14 participates in UTP binding. ATP is bound by residues 15 to 20 and D72; that span reads SLGKGI. The Mg(2+) site is built by D72 and E140. CTP is bound by residues 147 to 149, 187 to 192, and K223; these read DIE and KTKPTQ. UTP contacts are provided by residues 187 to 192 and K223; that span reads KTKPTQ. 239-241 lines the ATP pocket; that stretch reads KDV. The 252-residue stretch at 291–542 folds into the Glutamine amidotransferase type-1 domain; that stretch reads TIGMVGKYVE…VKAAKENQKK (252 aa). G352 provides a ligand contact to L-glutamine. C379 functions as the Nucleophile; for glutamine hydrolysis in the catalytic mechanism. Residues 380 to 383, E403, and R470 each bind L-glutamine; that span reads LGMQ. Residues H515 and E517 contribute to the active site.

It belongs to the CTP synthase family. Homotetramer.

It carries out the reaction UTP + L-glutamine + ATP + H2O = CTP + L-glutamate + ADP + phosphate + 2 H(+). The enzyme catalyses L-glutamine + H2O = L-glutamate + NH4(+). It catalyses the reaction UTP + NH4(+) + ATP = CTP + ADP + phosphate + 2 H(+). The protein operates within pyrimidine metabolism; CTP biosynthesis via de novo pathway; CTP from UDP: step 2/2. Its activity is regulated as follows. Allosterically activated by GTP, when glutamine is the substrate; GTP has no effect on the reaction when ammonia is the substrate. The allosteric effector GTP functions by stabilizing the protein conformation that binds the tetrahedral intermediate(s) formed during glutamine hydrolysis. Inhibited by the product CTP, via allosteric rather than competitive inhibition. Catalyzes the ATP-dependent amination of UTP to CTP with either L-glutamine or ammonia as the source of nitrogen. Regulates intracellular CTP levels through interactions with the four ribonucleotide triphosphates. This Actinobacillus succinogenes (strain ATCC 55618 / DSM 22257 / CCUG 43843 / 130Z) protein is CTP synthase.